Here is a 269-residue protein sequence, read N- to C-terminus: MFSDKMILIAGPCVIEEEETTLEIASKIQEIVAPYTDHIHWIFKSSYDKANRSSINSYRGPGLQEGLRILSKVKQTFGVEILTDVHSPEEARAAAEVCDILQIPAFLCRQTDLLVAAAETHAVINIKKGQFLSPWDMQGPVDKVLSTGNSKIILTERGCSFGYNNLVSDMRSIAVLSKMGFPVVFDGTHSVQLPGGLKTHSGGQTEFIPTLTRAALAAGAHGLFIETHMNPAIAKSDAASMLSLKTFEALLPIWNQLYQCVRSFEMAAV.

The protein belongs to the KdsA family.

The protein localises to the cytoplasm. The enzyme catalyses D-arabinose 5-phosphate + phosphoenolpyruvate + H2O = 3-deoxy-alpha-D-manno-2-octulosonate-8-phosphate + phosphate. The protein operates within carbohydrate biosynthesis; 3-deoxy-D-manno-octulosonate biosynthesis; 3-deoxy-D-manno-octulosonate from D-ribulose 5-phosphate: step 2/3. Its pathway is bacterial outer membrane biogenesis; lipopolysaccharide biosynthesis. This Chlamydophila psittaci (strain ATCC VR-125 / 6BC) (Chlamydia psittaci) protein is 2-dehydro-3-deoxyphosphooctonate aldolase (kdsA).